A 1137-amino-acid chain; its full sequence is Guanine nucleotide exchange factor DBS (1137 aa).

Residues 52–224 form the CRAL-TRIO domain; that stretch reads TAMATDEIMH…DLGGTLDYCH (173 aa). One copy of the Spectrin repeat lies at 351–456; it reads LQLRHFEQGF…IARRRGLLSK (106 aa). Phosphoserine is present on residues Ser457 and Ser480. The stretch at 503–529 forms a coiled coil; sequence LETGAENKIQELNAIYKEYESILNQDL. A disordered region spans residues 557–625; that stretch reads LAARQTRPVQ…QGRGSAGEEE (69 aa). Positions 584 to 597 are enriched in low complexity; it reads GIRRGSENSSSEGG. A compositionally biased stretch (basic and acidic residues) spans 607 to 616; that stretch reads AKSEMSESRQ. Residue Ser620 is modified to Phosphoserine. The region spanning 631-811 is the DH domain; it reads LRRHVMSELL…LGILKAVNDS (181 aa). Residues 829-945 enclose the PH domain; it reads KLLMQGSFSV…WVNEIRKVLT (117 aa). Disordered regions lie at residues 955 to 1058 and 1116 to 1137; these read SQHR…LVPG and GPSGSAQCLSSSGKAHVPRAHP. The segment covering 962-977 has biased composition (low complexity); the sequence is QSQSLPLPAPTSTSPS. Phosphoserine occurs at positions 1033, 1034, 1041, and 1042. The 62-residue stretch at 1055-1116 folds into the SH3 domain; that stretch reads LVPGKYTVVA…PASSLSVRLG (62 aa). Polar residues predominate over residues 1119–1128; that stretch reads GSAQCLSSSG.

This sequence belongs to the MCF2 family. Interacts with GTP-bound RAC1. Interacts with CDC42. Interacts with RHOA. Interacts with CCPG1, which results in specific inhibition of its exchange activity toward RHOA, but does not affect its activity on CDC42.

Its subcellular location is the cytoplasm. It localises to the cell membrane. It is found in the endomembrane system. Functionally, guanine nucleotide exchange factor that catalyzes guanine nucleotide exchange on RHOA and CDC42, and thereby contributes to the regulation of RHOA and CDC42 signaling pathways. Seems to lack activity with RAC1. Becomes activated and highly tumorigenic by truncation of the N-terminus. Isoform 5 activates CDC42. Does not catalyze guanine nucleotide exchange on CDC42. This is Guanine nucleotide exchange factor DBS (MCF2L) from Homo sapiens (Human).